Reading from the N-terminus, the 447-residue chain is Tubulin beta chain (447 aa).

Positions 11, 69, 138, 142, 143, 144, 204, and 226 each coordinate GTP. E69 serves as a coordination point for Mg(2+). The tract at residues 424–447 is disordered; the sequence is QYQEASVSEGEEEYDEEAPLEAEE. A compositionally biased stretch (acidic residues) spans 432 to 447; that stretch reads EGEEEYDEEAPLEAEE.

Belongs to the tubulin family. As to quaternary structure, dimer of alpha and beta chains. A typical microtubule is a hollow water-filled tube with an outer diameter of 25 nm and an inner diameter of 15 nM. Alpha-beta heterodimers associate head-to-tail to form protofilaments running lengthwise along the microtubule wall with the beta-tubulin subunit facing the microtubule plus end conferring a structural polarity. Microtubules usually have 13 protofilaments but different protofilament numbers can be found in some organisms and specialized cells. It depends on Mg(2+) as a cofactor.

The protein resides in the cytoplasm. The protein localises to the cytoskeleton. Functionally, tubulin is the major constituent of microtubules, a cylinder consisting of laterally associated linear protofilaments composed of alpha- and beta-tubulin heterodimers. Microtubules grow by the addition of GTP-tubulin dimers to the microtubule end, where a stabilizing cap forms. Below the cap, tubulin dimers are in GDP-bound state, owing to GTPase activity of alpha-tubulin. The polypeptide is Tubulin beta chain (TUB1) (Cochliobolus heterostrophus (Southern corn leaf blight fungus)).